Here is a 297-residue protein sequence, read N- to C-terminus: tRNA pseudouridine synthase B (297 aa).

D44 serves as the catalytic Nucleophile.

Belongs to the pseudouridine synthase TruB family. Type 1 subfamily.

The enzyme catalyses uridine(55) in tRNA = pseudouridine(55) in tRNA. Functionally, responsible for synthesis of pseudouridine from uracil-55 in the psi GC loop of transfer RNAs. This chain is tRNA pseudouridine synthase B, found in Mycobacterium sp. (strain JLS).